A 244-amino-acid polypeptide reads, in one-letter code: tRNA pseudouridine synthase A (244 aa).

Residue D53 is the Nucleophile of the active site. Y111 is a substrate binding site.

Belongs to the tRNA pseudouridine synthase TruA family. As to quaternary structure, homodimer.

The enzyme catalyses uridine(38/39/40) in tRNA = pseudouridine(38/39/40) in tRNA. Its function is as follows. Formation of pseudouridine at positions 38, 39 and 40 in the anticodon stem and loop of transfer RNAs. This is tRNA pseudouridine synthase A from Bacillus sp. (strain KSM-64).